A 407-amino-acid polypeptide reads, in one-letter code: MLRIGLTGGIGAGKSALSSAFAQCGAVIVDGDVIAREVVRPGTEGLAALVEAFGRDILLADGSLDRPALAAKAFADDAARQTLNGIVHPLVGARRAEIIASVPADSVVVEDIPLLVESGMAPLFPLVVIVYADVEVRLRRLVEQRGMAEADARARIAAQASDEQRRAVADIWLDNSGSPAELVQRAQQVWNERIVPFAHNLSTRQIARAPVRLVPPDPEWPAQAQRIVNRLKTASGHRALRVDHVGSTALPGDPDFAAKDVIDIQITVESLAAADELVEPLLAAGYPRLEHITADVAKPDARSTVERYDHTGDPALWHKRIHASADPGRPTNVHIRVDGWPGQQFALLFVDWLTADPDARADYLAVKRSAEQRADGDIDAYVAVKEPWFRDAYRRAWDWADSTGWKP.

The region spanning 3 to 201 (RIGLTGGIGA…ERIVPFAHNL (199 aa)) is the DPCK domain. Residue 11-16 (GAGKSA) participates in ATP binding. The tract at residues 196 to 407 (PFAHNLSTRQ…DWADSTGWKP (212 aa)) is UPF0157.

The protein in the N-terminal section; belongs to the CoaE family. In the C-terminal section; belongs to the UPF0157 (GrpB) family.

The protein resides in the cytoplasm. The catalysed reaction is 3'-dephospho-CoA + ATP = ADP + CoA + H(+). It participates in cofactor biosynthesis; coenzyme A biosynthesis; CoA from (R)-pantothenate: step 5/5. Functionally, catalyzes the phosphorylation of the 3'-hydroxyl group of dephosphocoenzyme A to form coenzyme A. This chain is Dephospho-CoA kinase, found in Mycolicibacterium paratuberculosis (strain ATCC BAA-968 / K-10) (Mycobacterium paratuberculosis).